A 65-amino-acid polypeptide reads, in one-letter code: Large ribosomal subunit protein bL35 (65 aa).

The segment at M1–Q26 is disordered. Basic residues predominate over residues A10–Q26.

It belongs to the bacterial ribosomal protein bL35 family.

In Actinobacillus succinogenes (strain ATCC 55618 / DSM 22257 / CCUG 43843 / 130Z), this protein is Large ribosomal subunit protein bL35.